The following is a 226-amino-acid chain: Large ribosomal subunit protein mL67 (226 aa).

It belongs to the mitochondrion-specific ribosomal protein mL67 family. In terms of assembly, component of the mitochondrial large ribosomal subunit (mt-LSU). Mature yeast 74S mitochondrial ribosomes consist of a small (37S) and a large (54S) subunit. The 37S small subunit contains a 15S ribosomal RNA (15S mt-rRNA) and 34 different proteins. The 54S large subunit contains a 21S rRNA (21S mt-rRNA) and 46 different proteins.

The protein resides in the nucleus. Its subcellular location is the mitochondrion. In terms of biological role, component of the mitochondrial ribosome (mitoribosome), a dedicated translation machinery responsible for the synthesis of mitochondrial genome-encoded proteins, including at least some of the essential transmembrane subunits of the mitochondrial respiratory chain. The mitoribosomes are attached to the mitochondrial inner membrane and translation products are cotranslationally integrated into the membrane. mL67/MHR1 also has extraribosomal functions, being involved in regulation of mitochondrial DNA recombination, maintenance and repair, and generation of homoplasmic cells. mL67/MHR1 also acts as transcription factor involved in regulation of RNA polymerase II-dependent transcription. The sequence is that of Large ribosomal subunit protein mL67 (MHR1) from Saccharomyces cerevisiae (strain ATCC 204508 / S288c) (Baker's yeast).